The sequence spans 328 residues: Tetraacyldisaccharide 4'-kinase (328 aa).

Residue 55–62 participates in ATP binding; it reads TAGGNGKT.

Belongs to the LpxK family.

The catalysed reaction is a lipid A disaccharide + ATP = a lipid IVA + ADP + H(+). The protein operates within glycolipid biosynthesis; lipid IV(A) biosynthesis; lipid IV(A) from (3R)-3-hydroxytetradecanoyl-[acyl-carrier-protein] and UDP-N-acetyl-alpha-D-glucosamine: step 6/6. Its function is as follows. Transfers the gamma-phosphate of ATP to the 4'-position of a tetraacyldisaccharide 1-phosphate intermediate (termed DS-1-P) to form tetraacyldisaccharide 1,4'-bis-phosphate (lipid IVA). The chain is Tetraacyldisaccharide 4'-kinase from Escherichia coli O45:K1 (strain S88 / ExPEC).